The following is a 578-amino-acid chain: CTP synthase 2 (578 aa).

The Glutamine amidotransferase type-1 domain occupies 300–553; sequence SIALVGKYTK…MLAASGKLNT (254 aa). Residues C399, H526, and E528 each act as for GATase activity in the active site.

The protein belongs to the CTP synthase family.

It carries out the reaction UTP + L-glutamine + ATP + H2O = CTP + L-glutamate + ADP + phosphate + 2 H(+). It participates in pyrimidine metabolism; CTP biosynthesis via de novo pathway; CTP from UDP: step 2/2. In terms of biological role, catalyzes the ATP-dependent amination of UTP to CTP with either L-glutamine or ammonia as the source of nitrogen. Constitutes the rate-limiting enzyme in the synthesis of cytosine nucleotides. This Xenopus laevis (African clawed frog) protein is CTP synthase 2 (ctps2).